A 93-amino-acid polypeptide reads, in one-letter code: Alpha-conotoxin RVIIIA (93 aa).

Positions 1–20 (MMSKMGAMFVLLLLFTLASS) are cleaved as a signal peptide. Positions 21 to 46 (QQEGDVQARKTHPKREFQRILLRSGR) are excised as a propeptide. Residues Glu63 and Glu68 each carry the 4-carboxyglutamate modification.

Contains 5 disulfide bonds. In terms of tissue distribution, expressed by the venom duct.

The protein resides in the secreted. Functionally, alpha-conotoxins act on postsynaptic membranes, they bind to the nicotinic acetylcholine receptors (nAChR) and thus inhibit them. This toxin provokes a nearly complete and slowly reversible inhibition of both the human adult (alpha-1-beta-1-epsilon-delta (CHRNA1-CHRNB1-CHRND-CHRNE)) and human fetal (alpha-1-beta-1-gamma-delta (CHRNA1-CHRNB1-CHRNG-CHRND)) neuromuscular nAChRs. It also reversibly blocks the neuromuscular alpha-7/CHRNA7 nAChR, the alpha-3-beta-2 (CHRNA3-CHRNB2) nAChR, the chimeric alpha-6 or -3/beta-3 or -2 (CHRNA6/CHRNA3-CHRNB2-CHRNB3) nAChR and with a low potency the alpha-4-beta-2 (CHRNA4-CHRNB2) nAChR. In addition, the toxin also inhibits the alpha-9-alpha-10 (CHRNA9-CHRNA10) nAChR with a high potency (IC(50)=187 nM). In Conus radiatus (Rayed cone), this protein is Alpha-conotoxin RVIIIA.